The chain runs to 349 residues: MERGNEKIKLTELVKLHGUACKLPSTELEFLVKGIVTDDDLLDKNILVGLGDDASIIKRNGLVIAKTVDVFTPIVDDPYIQGKIAACNSTSDIYAMGLLDIVGVLAIVGIPEKLPIHVVREMLKGFQDFCRENKTTIVGGHTILNPWPLIGGAVTGVGREEEVLTKAGVKVGDVLILTKPLGTQTAMALSRIPEEFKDLISITEEERDYIINKAIEIMTTSNRYALKALRKAEERVGDKIANALTDITGFGILGHSNEMAKNSNVLIEINLLPCIKRTPELSRLFGHALLDGYGAETAGGLLISAKEEYKDNLIDELEKAKCYAFEVGRVVKKGEGKAVLSKDVKVIEI.

U19 is an active-site residue. A non-standard amino acid (selenocysteine) is located at residue U19. Residues K22 and 50-52 (LGD) contribute to the ATP site. D53 is a Mg(2+) binding site. Residues D69, D92, and 140–142 (GHT) each bind ATP. A Mg(2+)-binding site is contributed by D92. Residue D246 participates in Mg(2+) binding.

It belongs to the selenophosphate synthase 1 family. Class I subfamily. In terms of assembly, homodimer. It depends on Mg(2+) as a cofactor.

The enzyme catalyses hydrogenselenide + ATP + H2O = selenophosphate + AMP + phosphate + 2 H(+). Synthesizes selenophosphate from selenide and ATP. This Methanocaldococcus jannaschii (strain ATCC 43067 / DSM 2661 / JAL-1 / JCM 10045 / NBRC 100440) (Methanococcus jannaschii) protein is Selenide, water dikinase.